A 223-amino-acid polypeptide reads, in one-letter code: Cytidine deaminase 3 (223 aa).

2 CMP/dCMP-type deaminase domains span residues 21–154 (TEPM…FSPD) and 184–223 (SDCSHLKCKALAAANNSFSPYTNSPSGVALQDDDGNWYRG). A substrate-binding site is contributed by 62-64 (NVE). A Zn(2+)-binding site is contributed by H75. The active-site Proton donor is E77. Residues C110 and C113 each coordinate Zn(2+).

It belongs to the cytidine and deoxycytidylate deaminase family. In terms of assembly, homodimer. It depends on Zn(2+) as a cofactor.

The enzyme catalyses cytidine + H2O + H(+) = uridine + NH4(+). It carries out the reaction 2'-deoxycytidine + H2O + H(+) = 2'-deoxyuridine + NH4(+). In terms of biological role, this enzyme scavenges exogenous and endogenous cytidine and 2'-deoxycytidine for UMP synthesis. In Arabidopsis thaliana (Mouse-ear cress), this protein is Cytidine deaminase 3 (CDA3).